A 32-amino-acid chain; its full sequence is Acyclotide phyb-M (32 aa).

Position 1 is a pyrrolidone carboxylic acid (Gln-1). 3 cysteine pairs are disulfide-bonded: Cys-5–Cys-21, Cys-9–Cys-23, and Cys-14–Cys-28.

Post-translationally, contains 3 disulfide bonds. As to expression, expressed in midvein, lamina and periphery of leaves (at protein level).

Its function is as follows. Probably participates in a plant defense mechanism. The sequence is that of Acyclotide phyb-M from Petunia hybrida (Petunia).